The sequence spans 161 residues: Large ribosomal subunit protein eL21 (161 aa).

The protein belongs to the eukaryotic ribosomal protein eL21 family.

In Cyanophora paradoxa, this protein is Large ribosomal subunit protein eL21 (RPL21).